The chain runs to 510 residues: GMP synthase [glutamine-hydrolyzing] (510 aa).

The Glutamine amidotransferase type-1 domain occupies 5–195 (KILVLDFGGQ…LFKVCGVKGT (191 aa)). Cys82 functions as the Nucleophile in the catalytic mechanism. Active-site residues include His169 and Glu171. The 190-residue stretch at 196-385 (WNMADFINEE…LGLPDEIVWR (190 aa)) folds into the GMPS ATP-PPase domain. An ATP-binding site is contributed by 223–229 (SGGVDSA).

As to quaternary structure, homodimer.

The enzyme catalyses XMP + L-glutamine + ATP + H2O = GMP + L-glutamate + AMP + diphosphate + 2 H(+). The protein operates within purine metabolism; GMP biosynthesis; GMP from XMP (L-Gln route): step 1/1. Catalyzes the synthesis of GMP from XMP. The chain is GMP synthase [glutamine-hydrolyzing] from Halothermothrix orenii (strain H 168 / OCM 544 / DSM 9562).